The sequence spans 666 residues: Calmodulin-binding receptor kinase CaMRLK (666 aa).

The N-terminal stretch at 1–17 is a signal peptide; it reads MFLKLFLLLSLVSFSHS. Residues 18 to 297 lie on the Extracellular side of the membrane; the sequence is DSSSTVSCPN…KTHRTNHTPL (280 aa). N-linked (GlcNAc...) asparagine glycosylation is found at asparagine 27, asparagine 45, asparagine 52, asparagine 68, asparagine 78, asparagine 89, asparagine 110, asparagine 126, asparagine 137, asparagine 148, asparagine 154, asparagine 189, asparagine 212, asparagine 229, and asparagine 261. LRR repeat units follow at residues 79-103, 105-127, 130-152, 153-177, 178-197, 198-224, and 226-246; these read LTRL…LWSM, GLVS…PVNG, LSAV…FTGF, TNLT…SLSG, LRHL…PISG, LKSL…NLNH, and QFLN…KYRK. Residues 298 to 318 traverse the membrane as a helical segment; sequence VIGLSSSLGALIIVIFAAAII. Positions 319-337 are calmodulin binding; sequence LIRRRMKSARTKSRWAISN. The Cytoplasmic segment spans residues 319-666; sequence LIRRRMKSAR…LLKDIRTVSR (348 aa). Residues 395–661 form the Protein kinase domain; the sequence is FGTESVISDG…QQVLGLLKDI (267 aa). ATP contacts are provided by residues 401–409 and lysine 423; that span reads ISDGTCGPL.

The protein belongs to the protein kinase superfamily. Ser/Thr protein kinase family. As to quaternary structure, binds calmodulin (CaM) in a calcium-dependent manner. Interacts with CAM1, but not with CAM8. Mn(2+) serves as cofactor. Requires Mg(2+) as cofactor. Post-translationally, calmodulin (CaM)-independent autophosphorylation. Expressed in reproductive and vegetative tissues, with higher levels in seedlings and flowers, but not in leaves.

It is found in the cell membrane. The catalysed reaction is L-seryl-[protein] + ATP = O-phospho-L-seryl-[protein] + ADP + H(+). It catalyses the reaction L-threonyl-[protein] + ATP = O-phospho-L-threonyl-[protein] + ADP + H(+). Its activity is regulated as follows. Not stimulated by calmodulin (CaM). In terms of biological role, can phosphorylate the myelin basic protein in vitro. Required for endosperm development in embryos. Maybe involved in auxin and osmotic stress responses. This Arabidopsis thaliana (Mouse-ear cress) protein is Calmodulin-binding receptor kinase CaMRLK.